A 913-amino-acid chain; its full sequence is Tyrosine-protein phosphatase non-receptor type 3 (913 aa).

One can recognise an FERM domain in the interval 29 to 312 (VICSIRFLDG…EHHSFFQAKK (284 aa)). Phosphoserine occurs at positions 357, 359, and 367. Disordered stretches follow at residues 364–400 (ETKS…DNLA) and 417–473 (KGPL…PDGV). Threonine 376 is modified (phosphothreonine). Phosphoserine is present on serine 381. A compositionally biased stretch (basic residues) spans 382–393 (PRLRHEIRKPRH). The residue at position 425 (serine 425) is a Phosphoserine. The span at 441 to 453 (SENNPAQSCLTQK) shows a compositional bias: polar residues. The segment covering 454–470 (SSSSVSPSSNAPGSCSP) has biased composition (low complexity). The region spanning 510-582 (LIRITPDEEG…DQVVMFIKAS (73 aa)) is the PDZ domain. The region spanning 646–901 (VLIQFEQLYR…KFVCEAILRV (256 aa)) is the Tyrosine-protein phosphatase domain. Substrate-binding positions include aspartate 811, 842–848 (CSAGIGR), and glutamine 886. Residue cysteine 842 is the Phosphocysteine intermediate of the active site.

This sequence belongs to the protein-tyrosine phosphatase family. Non-receptor class subfamily.

The protein localises to the cell membrane. Its subcellular location is the cytoplasm. The protein resides in the cytoskeleton. It carries out the reaction O-phospho-L-tyrosyl-[protein] + H2O = L-tyrosyl-[protein] + phosphate. May act at junctions between the membrane and the cytoskeleton. In Mus musculus (Mouse), this protein is Tyrosine-protein phosphatase non-receptor type 3 (Ptpn3).